Reading from the N-terminus, the 123-residue chain is Large ribosomal subunit protein bL12 (123 aa).

Belongs to the bacterial ribosomal protein bL12 family. In terms of assembly, homodimer. Part of the ribosomal stalk of the 50S ribosomal subunit. Forms a multimeric L10(L12)X complex, where L10 forms an elongated spine to which 2 to 4 L12 dimers bind in a sequential fashion. Binds GTP-bound translation factors.

Its function is as follows. Forms part of the ribosomal stalk which helps the ribosome interact with GTP-bound translation factors. Is thus essential for accurate translation. This is Large ribosomal subunit protein bL12 from Parvibaculum lavamentivorans (strain DS-1 / DSM 13023 / NCIMB 13966).